Here is a 127-residue protein sequence, read N- to C-terminus: Putative 2Fe-2S ferredoxin (127 aa).

[2Fe-2S] cluster is bound by residues Cys-23, Cys-54, and Cys-58.

Belongs to the 2Fe2S Shethna-type ferredoxin family. The cofactor is [2Fe-2S] cluster.

Functionally, ferredoxins are iron-sulfur proteins that transfer electrons in a wide variety of metabolic reactions. The sequence is that of Putative 2Fe-2S ferredoxin (cbiW) from Priestia megaterium (Bacillus megaterium).